We begin with the raw amino-acid sequence, 280 residues long: Adenosylcobinamide-GDP ribazoletransferase (280 aa).

The next 7 helical transmembrane spans lie at Tyr-4–Met-24, Ile-34–Ala-54, Val-58–Phe-78, Thr-108–Ile-128, Ile-136–Val-156, Leu-197–Ile-217, and Ile-254–Gly-274.

This sequence belongs to the CobS family. Mg(2+) serves as cofactor.

Its subcellular location is the cell membrane. It carries out the reaction alpha-ribazole + adenosylcob(III)inamide-GDP = adenosylcob(III)alamin + GMP + H(+). The enzyme catalyses alpha-ribazole 5'-phosphate + adenosylcob(III)inamide-GDP = adenosylcob(III)alamin 5'-phosphate + GMP + H(+). The protein operates within cofactor biosynthesis; adenosylcobalamin biosynthesis; adenosylcobalamin from cob(II)yrinate a,c-diamide: step 7/7. Its function is as follows. Joins adenosylcobinamide-GDP and alpha-ribazole to generate adenosylcobalamin (Ado-cobalamin). Also synthesizes adenosylcobalamin 5'-phosphate from adenosylcobinamide-GDP and alpha-ribazole 5'-phosphate. The protein is Adenosylcobinamide-GDP ribazoletransferase of Methanosarcina mazei (strain ATCC BAA-159 / DSM 3647 / Goe1 / Go1 / JCM 11833 / OCM 88) (Methanosarcina frisia).